The sequence spans 310 residues: uncharacterized protein (310 aa).

Disordered stretches follow at residues Met1–Met53, Pro78–Asn127, and Gln153–Leu217. The span at Gly11–Asp25 shows a compositional bias: acidic residues. 2 stretches are compositionally biased toward polar residues: residues Ser37–Leu49 and Pro78–Pro88. Low complexity-rich tracts occupy residues Gln94–Thr126, Pro164–Thr184, and Tyr192–Thr208. Residues Asp268–Gln299 adopt a coiled-coil conformation.

This is an uncharacterized protein from Dictyostelium discoideum (Social amoeba).